Here is an 88-residue protein sequence, read N- to C-terminus: Small ribosomal subunit protein uS15 (88 aa).

Belongs to the universal ribosomal protein uS15 family. Part of the 30S ribosomal subunit. Forms a bridge to the 50S subunit in the 70S ribosome, contacting the 23S rRNA.

One of the primary rRNA binding proteins, it binds directly to 16S rRNA where it helps nucleate assembly of the platform of the 30S subunit by binding and bridging several RNA helices of the 16S rRNA. Functionally, forms an intersubunit bridge (bridge B4) with the 23S rRNA of the 50S subunit in the ribosome. The sequence is that of Small ribosomal subunit protein uS15 from Geotalea daltonii (strain DSM 22248 / JCM 15807 / FRC-32) (Geobacter daltonii).